A 345-amino-acid chain; its full sequence is MKLTILFGGASFEHEISIVSAITLKEKLSNFELNFIFCDQDHTFYLINASKMRATTFSRGEYKKMPKLTLSHGSFVQKSLFGSVDISGTVLNLIHGGDGEDGTIAAILDFFSIKYIGPRVDASVFSYDKRYTKWLCHARGVKCVESQELSSSEHSNIKIAYPIIVKPSRLGSSIGVSIVKDESKLDYALDSAFEFDNTVIVEPFLEGVKEYNLAGFSAGKKFYFSIIEEPQKEEFLDFEKKYMDFSRSGNVDSAEISKELESKLRASFEKVYKNLFEGALIRCDFFVVNGEVFLNEINPIPGSMANYLFDDFGGSLKLLANSLPHTKRAKVTYEYIHSISKAKGK.

The ATP-grasp domain maps to 133-332 (KWLCHARGVK…LPHTKRAKVT (200 aa)). Residue 160–211 (AYPIIVKPSRLGSSIGVSIVKDESKLDYALDSAFEFDNTVIVEPFLEGVKEY) participates in ATP binding. Mg(2+) contacts are provided by Asp-284, Glu-296, and Asn-298.

This sequence belongs to the D-alanine--D-alanine ligase family. The cofactor is Mg(2+). Mn(2+) is required as a cofactor.

The protein localises to the cytoplasm. The catalysed reaction is 2 D-alanine + ATP = D-alanyl-D-alanine + ADP + phosphate + H(+). It participates in cell wall biogenesis; peptidoglycan biosynthesis. Its function is as follows. Cell wall formation. The sequence is that of D-alanine--D-alanine ligase from Sulfurimonas denitrificans (strain ATCC 33889 / DSM 1251) (Thiomicrospira denitrificans (strain ATCC 33889 / DSM 1251)).